We begin with the raw amino-acid sequence, 247 residues long: Large ribosomal subunit protein uL30 (247 aa).

Belongs to the universal ribosomal protein uL30 family.

The protein is Large ribosomal subunit protein uL30 (RPL7L1) of Sus scrofa (Pig).